The primary structure comprises 69 residues: DNA-directed RNA polymerase subunit epsilon (69 aa).

Belongs to the RNA polymerase subunit epsilon family. In terms of assembly, RNAP is composed of a core of 2 alpha, a beta and a beta' subunit. The core is associated with a delta subunit, and at least one of epsilon or omega. When a sigma factor is associated with the core the holoenzyme is formed, which can initiate transcription.

The enzyme catalyses RNA(n) + a ribonucleoside 5'-triphosphate = RNA(n+1) + diphosphate. Functionally, a non-essential component of RNA polymerase (RNAP). The sequence is that of DNA-directed RNA polymerase subunit epsilon from Bacillus velezensis (strain DSM 23117 / BGSC 10A6 / LMG 26770 / FZB42) (Bacillus amyloliquefaciens subsp. plantarum).